The following is a 469-amino-acid chain: Asparagine--tRNA ligase (469 aa).

It belongs to the class-II aminoacyl-tRNA synthetase family. In terms of assembly, homodimer.

It localises to the cytoplasm. The catalysed reaction is tRNA(Asn) + L-asparagine + ATP = L-asparaginyl-tRNA(Asn) + AMP + diphosphate + H(+). The polypeptide is Asparagine--tRNA ligase (Porphyromonas gingivalis (strain ATCC 33277 / DSM 20709 / CIP 103683 / JCM 12257 / NCTC 11834 / 2561)).